The following is a 457-amino-acid chain: Elongation factor 1-alpha (457 aa).

Gly2 carries the post-translational modification N,N,N-trimethylglycine. Lys3 carries the post-translational modification N6,N6-dimethyllysine; alternate. Lys3 bears the N6-methyllysine; alternate mark. Residues 5-240 (KTHVNVVVIG…DAIEPPVRPS (236 aa)) enclose the tr-type G domain. A G1 region spans residues 14-21 (GHVDSGKS). 14–21 (GHVDSGKS) serves as a coordination point for GTP. N6-methyllysine is present on Lys30. A G2 region spans residues 70-74 (GITID). An N6,N6,N6-trimethyllysine modification is found at Lys79. Positions 91 to 94 (DAPG) are G3. GTP-binding positions include 91-95 (DAPGH) and 153-156 (NKMD). The tract at residues 153–156 (NKMD) is G4. Positions 192–194 (SGW) are G5. An N6,N6-dimethyllysine; alternate modification is found at Lys316. At Lys316 the chain carries N6-methyllysine; alternate. The residue at position 389 (Lys389) is an N6-methyllysine.

Belongs to the TRAFAC class translation factor GTPase superfamily. Classic translation factor GTPase family. EF-Tu/EF-1A subfamily.

It is found in the cytoplasm. In terms of biological role, this protein promotes the GTP-dependent binding of aminoacyl-tRNA to the A-site of ribosomes during protein biosynthesis. The sequence is that of Elongation factor 1-alpha (TEF-3) from Mucor circinelloides f. lusitanicus (Mucor racemosus var. lusitanicus).